The chain runs to 238 residues: Ribonuclease 3 (238 aa).

Positions 4–127 constitute an RNase III domain; it reads IEEFEKRLGY…TMGAIYLETG (124 aa). E40 serves as a coordination point for Mg(2+). D44 is an active-site residue. Positions 113 and 116 each coordinate Mg(2+). The active site involves E116. In terms of domain architecture, DRBM spans 154–223; it reads DYKTALQELT…ARIALEIFHR (70 aa).

It belongs to the ribonuclease III family. Homodimer. It depends on Mg(2+) as a cofactor.

It is found in the cytoplasm. It carries out the reaction Endonucleolytic cleavage to 5'-phosphomonoester.. Functionally, digests double-stranded RNA. Involved in the processing of primary rRNA transcript to yield the immediate precursors to the large and small rRNAs (23S and 16S). Processes some mRNAs, and tRNAs when they are encoded in the rRNA operon. Processes pre-crRNA and tracrRNA of type II CRISPR loci if present in the organism. In Wolinella succinogenes (strain ATCC 29543 / DSM 1740 / CCUG 13145 / JCM 31913 / LMG 7466 / NCTC 11488 / FDC 602W) (Vibrio succinogenes), this protein is Ribonuclease 3.